The chain runs to 61 residues: Small ribosomal subunit protein uS14B (61 aa).

Cys24, Cys27, Cys40, and Cys43 together coordinate Zn(2+).

It belongs to the universal ribosomal protein uS14 family. Zinc-binding uS14 subfamily. In terms of assembly, part of the 30S ribosomal subunit. Contacts proteins S3 and S10. Requires Zn(2+) as cofactor.

Binds 16S rRNA, required for the assembly of 30S particles and may also be responsible for determining the conformation of the 16S rRNA at the A site. The sequence is that of Small ribosomal subunit protein uS14B from Ligilactobacillus salivarius (strain UCC118) (Lactobacillus salivarius).